We begin with the raw amino-acid sequence, 231 residues long: Putative histone H1.9 (231 aa).

The H15 domain maps to 113–177; the sequence is QKPSTSKVIL…GSAGSFTLGK (65 aa). Phosphoserine is present on Ser-135. Residues 177 to 214 form a disordered region; the sequence is KKQASKSKLKVKRQRQQRWRSGQRPFGQHRSLLGSKQG. Residues 179-194 are compositionally biased toward basic residues; sequence QASKSKLKVKRQRQQR.

The protein belongs to the histone H1/H5 family. As to expression, expressed exclusively in the testis.

It is found in the nucleus. It localises to the chromosome. Functionally, DNA-binding protein that may be implicated in chromatin remodeling and/or transcriptional regulation during spermiogenesis, the process of spermatid maturation into spermatozoa. In Homo sapiens (Human), this protein is Putative histone H1.9.